A 305-amino-acid chain; its full sequence is HTH-type transcriptional activator BauR (305 aa).

The 58-residue stretch at 15–72 folds into the HTH lysR-type domain; it reads FDIRLLRIFKTIVECGSFSAAESTLGLSRSAISLHMGDLEKRLGMRLCQRGRAGFALT.

Belongs to the LysR transcriptional regulatory family.

Functionally, involved in the degradation of beta-alanine. BauR activates the transcription of the bauABCD operon. The sequence is that of HTH-type transcriptional activator BauR (bauR) from Pseudomonas aeruginosa (strain ATCC 15692 / DSM 22644 / CIP 104116 / JCM 14847 / LMG 12228 / 1C / PRS 101 / PAO1).